The following is a 377-amino-acid chain: Queuine tRNA-ribosyltransferase (377 aa).

Asp89 (proton acceptor) is an active-site residue. Substrate contacts are provided by residues 89–93, Asp143, Gln188, and Gly215; that span reads DSGGF. An RNA binding region spans residues 246–252; that stretch reads GVGKPED. The active-site Nucleophile is the Asp265. Positions 270–274 are RNA binding; important for wobble base 34 recognition; it reads TRNAR. The Zn(2+) site is built by Cys303, Cys305, Cys308, and His334.

This sequence belongs to the queuine tRNA-ribosyltransferase family. Homodimer. Within each dimer, one monomer is responsible for RNA recognition and catalysis, while the other monomer binds to the replacement base PreQ1. Zn(2+) is required as a cofactor.

The catalysed reaction is 7-aminomethyl-7-carbaguanine + guanosine(34) in tRNA = 7-aminomethyl-7-carbaguanosine(34) in tRNA + guanine. Its pathway is tRNA modification; tRNA-queuosine biosynthesis. Catalyzes the base-exchange of a guanine (G) residue with the queuine precursor 7-aminomethyl-7-deazaguanine (PreQ1) at position 34 (anticodon wobble position) in tRNAs with GU(N) anticodons (tRNA-Asp, -Asn, -His and -Tyr). Catalysis occurs through a double-displacement mechanism. The nucleophile active site attacks the C1' of nucleotide 34 to detach the guanine base from the RNA, forming a covalent enzyme-RNA intermediate. The proton acceptor active site deprotonates the incoming PreQ1, allowing a nucleophilic attack on the C1' of the ribose to form the product. After dissociation, two additional enzymatic reactions on the tRNA convert PreQ1 to queuine (Q), resulting in the hypermodified nucleoside queuosine (7-(((4,5-cis-dihydroxy-2-cyclopenten-1-yl)amino)methyl)-7-deazaguanosine). The sequence is that of Queuine tRNA-ribosyltransferase from Acinetobacter baumannii (strain ACICU).